The sequence spans 287 residues: AA14 family lytic polysaccharide monooxygenase A (287 aa).

A signal peptide spans 1–18 (MLRILTLSILATSKLASA). N-linked (GlcNAc...) asparagine glycosylation is found at N33, N83, and N137. Intrachain disulfides connect C188/C193, C195/C216, and C236/C243. A glycan (N-linked (GlcNAc...) asparagine) is linked at N238.

It belongs to the polysaccharide monooxygenase AA14 family. The cofactor is Cu(2+).

The protein localises to the secreted. Its function is as follows. Lytic polysaccharide monooxygenase (LPMO) that has a broad substrate specificity with strong oxidative activity on pure amorphous cellulose and xyloglucan and plays as a bifunctional enzyme to decompose some specific network structures formed between cellulose and hemicellulose in the plant cell walls. Catalysis by LPMOs requires the reduction of the active-site copper from Cu(II) to Cu(I) by a reducing agent and H(2)O(2) or O(2) as a cosubstrate. Simultaneously oxidizes cellulose, xylan and xyloglucan in natural hemi/cellulosic substrate such as fibrillated eucalyptus pulp, and releases native and oxidized cello-oligosaccharides, xylo-oligosaccharides and xyloglucan oligosaccharides from this substrate. The cellulolytic/hemicellulolytic activity becomes weaker as the contents of xylan increase in the alkaline-extracted hemi/cellulosic substrates. This Talaromyces rugulosus (Penicillium rugulosum) protein is AA14 family lytic polysaccharide monooxygenase A.